The following is a 275-amino-acid chain: MSNAELETAIEAAWEARDSISPATKGAERDAIEATLAALDGGGLRVAERQADGNWHVNQWAKKAVLLGFRIKDMEMQSGGAQGGGWWDKVDSKFAGWGEADWKDAGFRAVPNCVVRKSAYIAPGVVLMPSFVNLGAYVDEGTMVDTWATVGSCAQIGKNVHLSGGVGIGGVLEPMQAGPTIIEDNCFIGARSEVVEGCIVREGSVLGMGVFIGKSTKIVDRETGEFTYGEVPAGSVVVAGSMPSKNGVNLYCAVIVKKVDAQTRSKTSINELLRD.

Residues R108 and D145 each contribute to the substrate site.

The protein belongs to the transferase hexapeptide repeat family. As to quaternary structure, homotrimer.

The protein resides in the cytoplasm. It catalyses the reaction (S)-2,3,4,5-tetrahydrodipicolinate + succinyl-CoA + H2O = (S)-2-succinylamino-6-oxoheptanedioate + CoA. Its pathway is amino-acid biosynthesis; L-lysine biosynthesis via DAP pathway; LL-2,6-diaminopimelate from (S)-tetrahydrodipicolinate (succinylase route): step 1/3. The sequence is that of 2,3,4,5-tetrahydropyridine-2,6-dicarboxylate N-succinyltransferase from Roseobacter denitrificans (strain ATCC 33942 / OCh 114) (Erythrobacter sp. (strain OCh 114)).